The sequence spans 398 residues: Rhizopuspepsin-4 (398 aa).

The first 21 residues, 1–21 (MKFTLISSCVALACMALAVEA), serve as a signal peptide directing secretion. A propeptide spans 22 to 74 (APSGKKINVPLSKNANYKPNAKRAIEKANAKYARFRSSSSSSSSSSCGSAGTE) (activation peptide). The span at 58–78 (SSSSSSSSSSCGSAGTESSGS) shows a compositional bias: low complexity. The interval 58–83 (SSSSSSSSSSCGSAGTESSGSVPVTD) is disordered. The Peptidase A1 domain occupies 90-394 (YYGEVTVGTP…NPQVPQVQIA (305 aa)). D108 is a catalytic residue. The cysteines at positions 121 and 124 are disulfide-linked. D291 is a catalytic residue. Residues C325 and C358 are joined by a disulfide bond.

The protein belongs to the peptidase A1 family.

It carries out the reaction Hydrolysis of proteins with broad specificity similar to that of pepsin A, preferring hydrophobic residues at P1 and P1'. Clots milk and activates trypsinogen. Does not cleave 4-Gln-|-His-5, but does cleave 10-His-|-Leu-11 and 12-Val-|-Glu-13 in B chain of insulin.. This chain is Rhizopuspepsin-4, found in Rhizopus niveus.